We begin with the raw amino-acid sequence, 273 residues long: Large ribosomal subunit protein uL2 (273 aa).

The tract at residues 228–273 is disordered; it reads VDHPHGGGEGKTSGGRHPVTPWGFPTKGKKTRKNKRTSKFIVKKRK. The segment covering 254 to 273 has biased composition (basic residues); that stretch reads KGKKTRKNKRTSKFIVKKRK.

It belongs to the universal ribosomal protein uL2 family. Part of the 50S ribosomal subunit. Forms a bridge to the 30S subunit in the 70S ribosome.

Its function is as follows. One of the primary rRNA binding proteins. Required for association of the 30S and 50S subunits to form the 70S ribosome, for tRNA binding and peptide bond formation. It has been suggested to have peptidyltransferase activity; this is somewhat controversial. Makes several contacts with the 16S rRNA in the 70S ribosome. The protein is Large ribosomal subunit protein uL2 of Rickettsia akari (strain Hartford).